Here is a 464-residue protein sequence, read N- to C-terminus: UDP-N-acetylmuramoylalanine--D-glutamate ligase (464 aa).

112-118 (GTDGKTT) serves as a coordination point for ATP.

It belongs to the MurCDEF family.

It localises to the cytoplasm. The enzyme catalyses UDP-N-acetyl-alpha-D-muramoyl-L-alanine + D-glutamate + ATP = UDP-N-acetyl-alpha-D-muramoyl-L-alanyl-D-glutamate + ADP + phosphate + H(+). Its pathway is cell wall biogenesis; peptidoglycan biosynthesis. Functionally, cell wall formation. Catalyzes the addition of glutamate to the nucleotide precursor UDP-N-acetylmuramoyl-L-alanine (UMA). The protein is UDP-N-acetylmuramoylalanine--D-glutamate ligase of Chlorobium chlorochromatii (strain CaD3).